Consider the following 395-residue polypeptide: Acetate kinase (395 aa).

Asn7 contributes to the Mg(2+) binding site. Position 14 (Lys14) interacts with ATP. Residue Arg90 coordinates substrate. Asp147 serves as the catalytic Proton donor/acceptor. ATP is bound by residues 207-211 (HLGNG), 282-284 (DFR), and 330-334 (GLGEN). Residue Glu383 coordinates Mg(2+).

It belongs to the acetokinase family. Homodimer. It depends on Mg(2+) as a cofactor. The cofactor is Mn(2+).

The protein resides in the cytoplasm. The enzyme catalyses acetate + ATP = acetyl phosphate + ADP. Its pathway is metabolic intermediate biosynthesis; acetyl-CoA biosynthesis; acetyl-CoA from acetate: step 1/2. Functionally, catalyzes the formation of acetyl phosphate from acetate and ATP. Can also catalyze the reverse reaction. The polypeptide is Acetate kinase (Lachnoclostridium phytofermentans (strain ATCC 700394 / DSM 18823 / ISDg) (Clostridium phytofermentans)).